The primary structure comprises 510 residues: Zinc finger and SCAN domain-containing protein 18 (510 aa).

The interval 1-40 (MLPLEKAFASPRSSPAPPDLPTPGSAAGVQQEEPETIPER) is disordered. The SCAN box domain occupies 49–131 (RLRFREFVYQ…SLVEGLADVL (83 aa)). Disordered regions lie at residues 172–191 (ALGA…SPDP), 201–231 (EAKT…EWGH), 263–413 (TEEL…GKPY), and 461–510 (KTHE…EAQR). Composition is skewed to basic and acidic residues over residues 214–231 (QKLK…EWGH) and 263–273 (TEELRLVERDP). Residues 288-299 (AGCACEEAAPAG) show a composition bias toward low complexity. Residues 344 to 356 (DSATGSQRQSVIQ) show a composition bias toward polar residues. 2 consecutive C2H2-type zinc fingers follow at residues 413 to 435 (YACG…HSSH) and 441 to 463 (YACQ…QKTH). Residues 491 to 501 (GGPPESVEGEA) show a composition bias toward low complexity.

The protein belongs to the krueppel C2H2-type zinc-finger protein family.

It localises to the nucleus. Functionally, may be involved in transcriptional regulation. This is Zinc finger and SCAN domain-containing protein 18 (ZSCAN18) from Homo sapiens (Human).